We begin with the raw amino-acid sequence, 172 residues long: 3-hydroxydecanoyl-[acyl-carrier-protein] dehydratase (172 aa).

His-71 is an active-site residue.

Belongs to the thioester dehydratase family. FabA subfamily. Homodimer.

Its subcellular location is the cytoplasm. It carries out the reaction a (3R)-hydroxyacyl-[ACP] = a (2E)-enoyl-[ACP] + H2O. It catalyses the reaction (3R)-hydroxydecanoyl-[ACP] = (2E)-decenoyl-[ACP] + H2O. The enzyme catalyses (2E)-decenoyl-[ACP] = (3Z)-decenoyl-[ACP]. The protein operates within lipid metabolism; fatty acid biosynthesis. Necessary for the introduction of cis unsaturation into fatty acids. Catalyzes the dehydration of (3R)-3-hydroxydecanoyl-ACP to E-(2)-decenoyl-ACP and then its isomerization to Z-(3)-decenoyl-ACP. Can catalyze the dehydratase reaction for beta-hydroxyacyl-ACPs with saturated chain lengths up to 16:0, being most active on intermediate chain length. This is 3-hydroxydecanoyl-[acyl-carrier-protein] dehydratase from Escherichia coli O139:H28 (strain E24377A / ETEC).